A 1042-amino-acid polypeptide reads, in one-letter code: Kinesin-like protein KIN-5A (1042 aa).

Low complexity predominate over residues 1–14; sequence MDSNNSKKGSSVKS. Positions 1–45 are disordered; that stretch reads MDSNNSKKGSSVKSPCQTPRSTEKSNRDFRVDSNSNSNPVSKNEK. The span at 21-31 shows a compositional bias: basic and acidic residues; sequence STEKSNRDFRV. Polar residues predominate over residues 32–41; that stretch reads DSNSNSNPVS. The 343-residue stretch at 50 to 392 folds into the Kinesin motor domain; the sequence is NIQVIVRCRP…LDYAHRAKHI (343 aa). 136–143 provides a ligand contact to ATP; the sequence is GQTGTGKT. Positions 480 to 517 form a coiled coil; it reads TAGLREKLDKTEKKLYETEQALLDLEEKHRQAVATIKE. The segment at 1021-1042 is disordered; it reads KQMQNGEAKHVSNGRPPLTAIN.

This sequence belongs to the TRAFAC class myosin-kinesin ATPase superfamily. Kinesin family. KIN-5/BimC subfamily.

It localises to the cytoplasm. It is found in the cytoskeleton. Its subcellular location is the spindle. Functionally, responsible for microtubule translocation. May be important for the organization of phragmoplast-specific arrays of microtubules. Plays an essential role in stabilizing the mitotic spindle. Required during mitotic cytokinesis. This Arabidopsis thaliana (Mouse-ear cress) protein is Kinesin-like protein KIN-5A.